A 124-amino-acid chain; its full sequence is Large ribosomal subunit protein bL19 (124 aa).

Belongs to the bacterial ribosomal protein bL19 family.

Its function is as follows. This protein is located at the 30S-50S ribosomal subunit interface and may play a role in the structure and function of the aminoacyl-tRNA binding site. The sequence is that of Large ribosomal subunit protein bL19 from Dinoroseobacter shibae (strain DSM 16493 / NCIMB 14021 / DFL 12).